The sequence spans 380 residues: Erythronate-4-phosphate dehydrogenase (380 aa).

2 residues coordinate substrate: Ser-45 and Thr-66. Residues Asp-146 and Thr-174 each contribute to the NAD(+) site. Residue Arg-207 is part of the active site. Asp-231 provides a ligand contact to NAD(+). Glu-236 is a catalytic residue. The active-site Proton donor is His-253. Gly-256 lines the NAD(+) pocket. Residue Tyr-257 participates in substrate binding.

This sequence belongs to the D-isomer specific 2-hydroxyacid dehydrogenase family. PdxB subfamily. Homodimer.

It is found in the cytoplasm. The enzyme catalyses 4-phospho-D-erythronate + NAD(+) = (R)-3-hydroxy-2-oxo-4-phosphooxybutanoate + NADH + H(+). Its pathway is cofactor biosynthesis; pyridoxine 5'-phosphate biosynthesis; pyridoxine 5'-phosphate from D-erythrose 4-phosphate: step 2/5. Functionally, catalyzes the oxidation of erythronate-4-phosphate to 3-hydroxy-2-oxo-4-phosphonooxybutanoate. This Pseudomonas fluorescens (strain ATCC BAA-477 / NRRL B-23932 / Pf-5) protein is Erythronate-4-phosphate dehydrogenase.